The following is a 620-amino-acid chain: Toxin coregulated pilus biosynthesis protein I (620 aa).

A Methyl-accepting transducer domain is found at 344–580; sequence TMNDLSIKQT…DVAKQMEDIR (237 aa).

Belongs to the methyl-accepting chemotaxis (MCP) protein family.

It is found in the cell inner membrane. Its function is as follows. May function as an environmental regulator of TCP biogenesis. Negatively regulates the synthesis of the major pilin subunit of TCP (TcpA). The protein is Toxin coregulated pilus biosynthesis protein I (tcpI) of Vibrio cholerae serotype O1 (strain ATCC 39541 / Classical Ogawa 395 / O395).